The chain runs to 164 residues: Sperm axonemal maintenance protein CFAP97D1 (164 aa).

Residues 61–88 (LSKIQGEQKRIDKIEYENRQLCQKIANA) are a coiled coil.

Belongs to the CFAP97 family. As to expression, expressed exclusively in testis.

In terms of biological role, required for male fertility through its role in axonemal doublet stabilization which is essential for sperm motility and fertilization. This chain is Sperm axonemal maintenance protein CFAP97D1 (Cfap97d1), found in Mus musculus (Mouse).